The chain runs to 187 residues: Large ribosomal subunit protein eL18A (187 aa).

A phosphoserine mark is found at Ser-16 and Ser-64. A phosphothreonine mark is found at Thr-87, Thr-89, and Thr-134. Position 136 is a phosphoserine (Ser-136). Thr-138 is modified (phosphothreonine).

Belongs to the eukaryotic ribosomal protein eL18 family. Component of the large ribosomal subunit (LSU). Mature yeast ribosomes consist of a small (40S) and a large (60S) subunit. The 40S small subunit contains 1 molecule of ribosomal RNA (18S rRNA) and at least 33 different proteins. The large 60S subunit contains 3 rRNA molecules (25S, 5.8S and 5S rRNA) and at least 46 different proteins. eL18 interacts with NAP1.

It is found in the cytoplasm. Functionally, component of the ribosome, a large ribonucleoprotein complex responsible for the synthesis of proteins in the cell. The small ribosomal subunit (SSU) binds messenger RNAs (mRNAs) and translates the encoded message by selecting cognate aminoacyl-transfer RNA (tRNA) molecules. The large subunit (LSU) contains the ribosomal catalytic site termed the peptidyl transferase center (PTC), which catalyzes the formation of peptide bonds, thereby polymerizing the amino acids delivered by tRNAs into a polypeptide chain. The nascent polypeptides leave the ribosome through a tunnel in the LSU and interact with protein factors that function in enzymatic processing, targeting, and the membrane insertion of nascent chains at the exit of the ribosomal tunnel. In Schizosaccharomyces pombe (strain 972 / ATCC 24843) (Fission yeast), this protein is Large ribosomal subunit protein eL18A (rpl1801).